The sequence spans 295 residues: Small ribosomal subunit biogenesis GTPase RsgA (295 aa).

The CP-type G domain maps to 65-223 (KNQLVRPPVA…VLDTPGFTAL (159 aa)). Residues 114–117 (NKVD) and 165–173 (GPSGVGKSS) each bind GTP. Cys246, Cys251, His253, and Cys259 together coordinate Zn(2+).

This sequence belongs to the TRAFAC class YlqF/YawG GTPase family. RsgA subfamily. In terms of assembly, monomer. Associates with 30S ribosomal subunit, binds 16S rRNA. Zn(2+) is required as a cofactor.

It is found in the cytoplasm. In terms of biological role, one of several proteins that assist in the late maturation steps of the functional core of the 30S ribosomal subunit. Helps release RbfA from mature subunits. May play a role in the assembly of ribosomal proteins into the subunit. Circularly permuted GTPase that catalyzes slow GTP hydrolysis, GTPase activity is stimulated by the 30S ribosomal subunit. The polypeptide is Small ribosomal subunit biogenesis GTPase RsgA (Caldanaerobacter subterraneus subsp. tengcongensis (strain DSM 15242 / JCM 11007 / NBRC 100824 / MB4) (Thermoanaerobacter tengcongensis)).